A 262-amino-acid chain; its full sequence is tRNA pseudouridine synthase A (262 aa).

Catalysis depends on Asp-51, which acts as the Nucleophile. Tyr-109 is a substrate binding site.

It belongs to the tRNA pseudouridine synthase TruA family. Homodimer.

The enzyme catalyses uridine(38/39/40) in tRNA = pseudouridine(38/39/40) in tRNA. Its function is as follows. Formation of pseudouridine at positions 38, 39 and 40 in the anticodon stem and loop of transfer RNAs. The polypeptide is tRNA pseudouridine synthase A (Glaesserella parasuis serovar 5 (strain SH0165) (Haemophilus parasuis)).